The sequence spans 154 residues: Thioredoxin-like protein CXXS2 (154 aa).

The region spanning 23–148 (RRNKTQARSQ…LQKKTAAAAN (126 aa)) is the Thioredoxin domain. Ser31 carries the phosphoserine modification.

Belongs to the thioredoxin family. As to expression, ubiquitous.

It is found in the cytoplasm. Its function is as follows. Possesses low disulfide reductase activity, but efficient protein disulfide isomerase activity. Does not possess deglutathionylation activity. This is Thioredoxin-like protein CXXS2 (CXXS2) from Arabidopsis thaliana (Mouse-ear cress).